A 213-amino-acid polypeptide reads, in one-letter code: 5-deoxy-D-ribulose 1-phosphate aldolase (213 aa).

Residues 28-29 (GN), 45-46 (SG), and 74-76 (SSE) contribute to the substrate site. Glu-76 serves as the catalytic Proton donor/acceptor. The Mn(2+) site is built by Glu-76, His-95, His-97, and His-157.

It belongs to the aldolase class II family. As to quaternary structure, forms homooligomers, possibly homotetramers. The cofactor is Mn(2+).

The enzyme catalyses 5-deoxy-D-ribulose 1-phosphate = dihydroxyacetone phosphate + acetaldehyde. Its pathway is carbohydrate degradation. Functionally, catalyzes the cleavage of 5-deoxy-D-ribulose 1-phosphate to yield dihydroxyacetone phosphate (DHAP) and acetaldehyde, as part of a 5-deoxyribose salvage pathway that recycles this toxic radical SAM enzyme by-product to mainstream metabolites. Is also able to catalyze the reverse reaction, using several aldehydes as substrate, with acetaldehyde being the preferred substrate. The polypeptide is 5-deoxy-D-ribulose 1-phosphate aldolase (Bacillus thuringiensis serovar kurstaki (strain ATCC 35866 / NRRL B-4488 / HD73)).